A 25-amino-acid chain; its full sequence is Alanine racemase (25 aa).

The protein belongs to the alanine racemase family. In terms of assembly, homodimer. Pyridoxal 5'-phosphate is required as a cofactor.

It carries out the reaction L-alanine = D-alanine. It participates in amino-acid biosynthesis; D-alanine biosynthesis; D-alanine from L-alanine: step 1/1. Catalyzes the interconversion of L-alanine and D-alanine. This chain is Alanine racemase, found in Pseudomonas fluorescens.